Here is a 461-residue protein sequence, read N- to C-terminus: Juvenile hormone epoxide hydrolase (461 aa).

The chain crosses the membrane as a helical span at residues 4-24; it reads LLFIALPLLVLASIPLYLLVL. Catalysis depends on Asp227, which acts as the Nucleophile. Tyr373 serves as the catalytic Proton donor. The active-site Proton acceptor is the His430.

This sequence belongs to the peptidase S33 family. In terms of assembly, homodimer. Expressed in fat body, foregut and midgut but not in brain, subesophageal ganglia or silk gland of larvae on day 1 of fifth instar.

It is found in the microsome membrane. Its subcellular location is the endoplasmic reticulum membrane. It catalyses the reaction cis-stilbene oxide + H2O = (1R,2R)-hydrobenzoin. The catalysed reaction is 1-(4-methoxyphenyl)-N-methyl-N-[(3-methyloxetan-3-yl)methyl]methanamine + H2O = 2-{[(4-methoxybenzyl)(methyl)amino]methyl}-2-methylpropane-1,3-diol. Functionally, catalyzes juvenile hormone hydrolysis. Degrades juvenile hormone III (JH III) about 3 times and 5 times slower than juvenile hormone I (JH I) and II (JH II), respectively. Degrades cis-stilbene oxide and trans-stilbene oxide about 18 and 43 times slower than JH III, respectively. The polypeptide is Juvenile hormone epoxide hydrolase (Bombyx mori (Silk moth)).